Here is a 517-residue protein sequence, read N- to C-terminus: Glutamate--cysteine ligase (517 aa).

It belongs to the glutamate--cysteine ligase type 1 family. Type 1 subfamily.

The catalysed reaction is L-cysteine + L-glutamate + ATP = gamma-L-glutamyl-L-cysteine + ADP + phosphate + H(+). The protein operates within sulfur metabolism; glutathione biosynthesis; glutathione from L-cysteine and L-glutamate: step 1/2. This is Glutamate--cysteine ligase from Pectobacterium atrosepticum (strain SCRI 1043 / ATCC BAA-672) (Erwinia carotovora subsp. atroseptica).